The primary structure comprises 794 residues: MAAKRGLAKQKSRVTKACDRCHRKKIKCNSKKPCFGCIGSQSKCTYRNQFREPIEAFFNYTGSLSNDLDNAKCSIAKLKAQLPPSAPASLQKGLANICTELEKIQPQLYLNLDSKEISSYGGLKSIETEIIGKQSKSLNRFSNAFESNTAQNVSMYFGVYSPLLYFASTGISWITKKLISCSNDRETRETIYLFLKFLDASSASHAGPKVTSISPLEYYSKLNGLSCGNDVLIQHIMSNISNEIKGNTNINQTIKFNKPTDWFMYGVQLMEQHHKALDRKSSKKLLPLKYFLEQDELIFCLCLEYFERSLFSTMYDLTILKGLVSLMKHRYWIDDPFVLGRIISTMSRRSLDAGLNRWEYYIGQDEDTAEEYRKLWWDCYWWDRWYSLVTGKQPLIPHEMTSCLFPKDVVGLGVDDSMDCFTLINLVELDPSKFDICISFGYILLTKIITAVFSGLLYNRHFTDYRLFATPNAKDLNGTARQLMVEFSKICKIFQCIQDKLIPFLKQYSENSNVFELYTHFGFAKVCCFQGMESLILRIQNLLQERERIELDSCVKDIRLQTFEASVDILTDVLKHEDTFYIFRCSWFIYAILMNITLNFIETPRRNSICYLSLMCRMIASYNDLFVSSGNVNFKGNNAFSKKLENGTAVSFILTRICCQMYTRSQKMAKESLFCELKKYGQACSDAGQAALDIECIWYRNIIGEHKESSFRKEILSILDREMGDLVNNRVIGVQGKNQEGACYEKLSPSSTSVSVGMDFCSLENFVTAESLPDLLNLFWEDTEFGITKENLGE.

The Zn(2+) site is built by cysteine 18, cysteine 21, cysteine 28, cysteine 34, cysteine 37, and cysteine 44. Positions 18–44 (CDRCHRKKIKCNSKKPCFGCIGSQSKC) form a DNA-binding region, zn(2)-C6 fungal-type.

Its subcellular location is the nucleus. In terms of biological role, transcriptional activator required for growth on non-fermentable carbon sources and that regulates genes involved in fatty acid utilization. Acts as a direct activator that binds the promoters of oleate utilizing genes, encoded key enzymes in beta-oxidation and NADPH regeneration (POX1, FOX2,POT1 and IDP2), the glyoxylate shunt (MLS1 and ICL1), and gluconeogenesis (PCK1 and FBP1). Also regulates the abundance of peroxisomes that are vital for fatty acid oxidation. This chain is Transcription factor TOG1, found in Saccharomyces cerevisiae (strain ATCC 204508 / S288c) (Baker's yeast).